A 143-amino-acid chain; its full sequence is Large-conductance mechanosensitive channel (143 aa).

3 consecutive transmembrane segments (helical) span residues 10 to 30 (FAVKGNVIDLAVGVIIGGAFG), 40 to 60 (VIMPIVGLVFGRLDFSNLFLV), and 86 to 106 (GSFITVAVNFLILAFIIFMMV).

Belongs to the MscL family. In terms of assembly, homopentamer.

Its subcellular location is the cell inner membrane. Channel that opens in response to stretch forces in the membrane lipid bilayer. May participate in the regulation of osmotic pressure changes within the cell. The polypeptide is Large-conductance mechanosensitive channel (Paracidovorax citrulli (strain AAC00-1) (Acidovorax citrulli)).